A 168-amino-acid polypeptide reads, in one-letter code: Small ribosomal subunit protein uS5 (168 aa).

One can recognise an S5 DRBM domain in the interval 17 to 80 (IEDQLVAVNR…EDGKKKMINV (64 aa)).

Belongs to the universal ribosomal protein uS5 family. Part of the 30S ribosomal subunit. Contacts proteins S4 and S8.

With S4 and S12 plays an important role in translational accuracy. Its function is as follows. Located at the back of the 30S subunit body where it stabilizes the conformation of the head with respect to the body. The sequence is that of Small ribosomal subunit protein uS5 from Lactobacillus acidophilus (strain ATCC 700396 / NCK56 / N2 / NCFM).